Consider the following 547-residue polypeptide: uncharacterized protein (547 aa).

Positions 38-50 (RNLPFHREREKVE) are enriched in basic and acidic residues. The interval 38–89 (RNLPFHREREKVESNPNSSDEEDLTSTNNTRSSDNTTSDTEDDSGEDSYQVE) is disordered. Residues 62 to 75 (TSTNNTRSSDNTTS) are compositionally biased toward low complexity. 12 helical membrane passes run 108 to 128 (IYTL…SSIF), 148 to 168 (LCSA…APLS), 174 to 194 (LPLY…GGCS), 197 to 217 (IWSL…PMSA), 233 to 253 (GALL…PVMG), 265 to 285 (WDFW…CFTM), 346 to 366 (MYLV…PLIF), 377 to 397 (GLAI…TPII), 418 to 438 (LFPL…LGWT), 445 to 465 (WAAP…VLAV), 478 to 500 (AASA…TIVA), and 514 to 534 (SLLA…FFWG).

The protein belongs to the major facilitator superfamily. CAR1 family.

It is found in the membrane. This is an uncharacterized protein from Schizosaccharomyces pombe (strain 972 / ATCC 24843) (Fission yeast).